A 163-amino-acid chain; its full sequence is Probable ribosome biogenesis protein RLP24 (163 aa).

Belongs to the eukaryotic ribosomal protein eL24 family. In terms of assembly, associated with nucleolar and cytoplasmic pre-60S particles. At the end of biogenesis it dissociates from cytoplasmic pre-60S particles and is likely to be exchanged for its ribosomal homolog, RPL24.

Its subcellular location is the nucleus. The protein localises to the nucleolus. In terms of biological role, involved in the biogenesis of the 60S ribosomal subunit. Ensures the docking of GTPBP4/NOG1 to pre-60S particles. In Homo sapiens (Human), this protein is Probable ribosome biogenesis protein RLP24 (RSL24D1).